A 501-amino-acid polypeptide reads, in one-letter code: ATP synthase subunit alpha (501 aa).

169–176 (GDRQTGKT) serves as a coordination point for ATP.

This sequence belongs to the ATPase alpha/beta chains family. As to quaternary structure, F-type ATPases have 2 components, CF(1) - the catalytic core - and CF(0) - the membrane proton channel. CF(1) has five subunits: alpha(3), beta(3), gamma(1), delta(1), epsilon(1). CF(0) has three main subunits: a(1), b(2) and c(9-12). The alpha and beta chains form an alternating ring which encloses part of the gamma chain. CF(1) is attached to CF(0) by a central stalk formed by the gamma and epsilon chains, while a peripheral stalk is formed by the delta and b chains.

The protein localises to the cell membrane. It catalyses the reaction ATP + H2O + 4 H(+)(in) = ADP + phosphate + 5 H(+)(out). Functionally, produces ATP from ADP in the presence of a proton gradient across the membrane. The alpha chain is a regulatory subunit. This is ATP synthase subunit alpha from Streptococcus pneumoniae (strain 70585).